The chain runs to 634 residues: tRNA uridine 5-carboxymethylaminomethyl modification enzyme MnmG (634 aa).

Position 14–19 (14–19) interacts with FAD; it reads GGGHAG. 279-293 contributes to the NAD(+) binding site; that stretch reads GPRYCPSIEDKVVRF.

Belongs to the MnmG family. As to quaternary structure, homodimer. Heterotetramer of two MnmE and two MnmG subunits. Requires FAD as cofactor.

It localises to the cytoplasm. Functionally, NAD-binding protein involved in the addition of a carboxymethylaminomethyl (cmnm) group at the wobble position (U34) of certain tRNAs, forming tRNA-cmnm(5)s(2)U34. This is tRNA uridine 5-carboxymethylaminomethyl modification enzyme MnmG from Xanthomonas campestris pv. campestris (strain B100).